Here is a 597-residue protein sequence, read N- to C-terminus: Elongation factor 4 (597 aa).

The region spanning 2 to 184 (KHIRNFSIIA…KIVSAIPAPE (183 aa)) is the tr-type G domain. GTP contacts are provided by residues 14 to 19 (DHGKST) and 131 to 134 (NKID).

Belongs to the TRAFAC class translation factor GTPase superfamily. Classic translation factor GTPase family. LepA subfamily.

Its subcellular location is the cell inner membrane. The enzyme catalyses GTP + H2O = GDP + phosphate + H(+). In terms of biological role, required for accurate and efficient protein synthesis under certain stress conditions. May act as a fidelity factor of the translation reaction, by catalyzing a one-codon backward translocation of tRNAs on improperly translocated ribosomes. Back-translocation proceeds from a post-translocation (POST) complex to a pre-translocation (PRE) complex, thus giving elongation factor G a second chance to translocate the tRNAs correctly. Binds to ribosomes in a GTP-dependent manner. This is Elongation factor 4 from Vibrio vulnificus (strain CMCP6).